The chain runs to 427 residues: Serine protease inhibitor 88Ea (427 aa).

The first 18 residues, methionine 1 to alanine 18, serve as a signal peptide directing secretion. Asparagine 224 carries N-linked (GlcNAc...) asparagine glycosylation.

The protein belongs to the serpin family. Expressed in nurse cells and oocytes. Expressed in wings.

The protein resides in the secreted. In terms of biological role, serine protease inhibitor with activity toward trypsin. Negatively regulates the Toll signaling pathway and suppresses the expression of the antifungal peptide drosomycin. Its negative regulation of the Toll signaling pathway also results in the inhibition of the melanization immune response via the phenoloxidase (PPO1) cascade. Essential for unfolding and expansion of the wings after emergence from the pupal case. May regulate the Toll pathway by blocking the proteolysis of the Toll ligand spz. The protein is Serine protease inhibitor 88Ea of Drosophila melanogaster (Fruit fly).